A 582-amino-acid polypeptide reads, in one-letter code: Envelope glycoprotein (582 aa).

Positions 1 to 35 are cleaved as a signal peptide; the sequence is MDCLTDLRSTEGKVDQAGKTLILLVVWWGFGTTAE. The Extracellular segment spans residues 36 to 519; that stretch reads GHPLQQLWEL…DNPLWNGLNG (484 aa). Asn-241 carries an N-linked (GlcNAc...) asparagine; by host glycan. Positions 251–254 match the CXXC motif; that stretch reads CWLC. Cystine bridges form between Cys-251/Cys-254, Cys-251/Cys-481, and Cys-473/Cys-480. Residues Asn-301 and Asn-314 are each glycosylated (N-linked (GlcNAc...) asparagine; by host). Positions 396–416 are fusion peptide; the sequence is FIPLLVGLGITGATLAGGTGL. Coiled-coil stretches lie at residues 417–467 and 477–513; these read GVSV…LLTA and QEKC…DNPL. Residues 456–472 form an immunosuppression region; that stretch reads LQNRRGLDLLTAEQGGI. Residues 473–481 carry the CX6CC motif; sequence CLALQEKCC. Asn-485 carries N-linked (GlcNAc...) asparagine; by host glycosylation. The helical transmembrane segment at 520 to 540 threads the bilayer; the sequence is FLPYLLPSLGPLFGLILFLTL. The Cytoplasmic segment spans residues 541-582; it reads GPCIRKTLTRIIHDKIQGSKNPRISPAVQATPNRDGYPRSMV. Residue Cys-543 is the site of S-palmitoyl cysteine; by host attachment. Residues 562–572 are compositionally biased toward polar residues; it reads PRISPAVQATP. The interval 562–582 is disordered; that stretch reads PRISPAVQATPNRDGYPRSMV.

As to quaternary structure, the mature envelope protein (Env) consists of a trimer of SU-TM heterodimers attached by a labile interchain disulfide bond. Specific enzymatic cleavages in vivo yield mature proteins. Envelope glycoproteins are synthesized as an inactive precursor that is N-glycosylated and processed likely by host cell furin or by a furin-like protease in the Golgi to yield the mature SU and TM proteins. The cleavage site between SU and TM requires the minimal sequence [KR]-X-[KR]-R. Post-translationally, the CXXC motif is highly conserved across a broad range of retroviral envelope proteins. It is thought to participate in the formation of a labile disulfide bond possibly with the CX6CC motif present in the transmembrane protein. Isomerization of the intersubunit disulfide bond to an SU intrachain disulfide bond is thought to occur upon receptor recognition in order to allow membrane fusion. In terms of processing, the transmembrane protein is palmitoylated.

It is found in the virion membrane. The protein resides in the host cell membrane. In terms of biological role, the surface protein (SU) attaches the virus to the host cell by binding to its receptor. This interaction triggers the refolding of the transmembrane protein (TM) and is thought to activate its fusogenic potential by unmasking its fusion peptide. Fusion occurs at the host cell plasma membrane. Functionally, the transmembrane protein (TM) acts as a class I viral fusion protein. Under the current model, the protein has at least 3 conformational states: pre-fusion native state, pre-hairpin intermediate state, and post-fusion hairpin state. During viral and target cell membrane fusion, the coiled coil regions (heptad repeats) assume a trimer-of-hairpins structure, positioning the fusion peptide in close proximity to the C-terminal region of the ectodomain. The formation of this structure appears to drive apposition and subsequent fusion of viral and target cell membranes. Membranes fusion leads to delivery of the nucleocapsid into the cytoplasm. The chain is Envelope glycoprotein (env) from Galliformes.